Consider the following 704-residue polypeptide: Low calcium response locus protein D (704 aa).

The next 7 membrane-spanning stretches (helical) occupy residues 18 to 35 (IMLA…VLPL), 42 to 61 (ILIA…AIYI), 108 to 132 (FVVG…FLVI), 200 to 220 (AIAG…IGVT), 235 to 259 (ILTV…GIIV), 278 to 297 (VVAQ…LFGL), and 304 to 320 (VTFL…GYML).

Belongs to the FHIPEP (flagella/HR/invasion proteins export pore) family.

The protein resides in the cell inner membrane. In terms of biological role, could be involved in the secretion of the yop virulence proteins. The protein is Low calcium response locus protein D (lcrD) of Yersinia pestis.